Here is a 269-residue protein sequence, read N- to C-terminus: Phosphonates import ATP-binding protein PhnC (269 aa).

One can recognise an ABC transporter domain in the interval 2–245 (LVVEGLTCRF…VARELYDLEA (244 aa)). 34-41 (GRSGAGKS) is an ATP binding site.

Belongs to the ABC transporter superfamily. Phosphonates importer (TC 3.A.1.9.1) family. In terms of assembly, the complex is composed of two ATP-binding proteins (PhnC), two transmembrane proteins (PhnE) and a solute-binding protein (PhnD).

The protein localises to the cell inner membrane. The catalysed reaction is phosphonate(out) + ATP + H2O = phosphonate(in) + ADP + phosphate + H(+). Part of the ABC transporter complex PhnCDE involved in phosphonates import. Responsible for energy coupling to the transport system. This is Phosphonates import ATP-binding protein PhnC from Bradyrhizobium diazoefficiens (strain JCM 10833 / BCRC 13528 / IAM 13628 / NBRC 14792 / USDA 110).